A 359-amino-acid polypeptide reads, in one-letter code: L-seryl-tRNA(Sec) kinase (359 aa).

25–32 (GLPAAGKS) serves as a coordination point for ATP.

The protein belongs to the L-seryl-tRNA(Sec) kinase family. The cofactor is Mg(2+).

The catalysed reaction is L-seryl-tRNA(Sec) + ATP = O-phospho-L-seryl-tRNA(Sec) + ADP. Its pathway is aminoacyl-tRNA biosynthesis; selenocysteinyl-tRNA(Sec) biosynthesis; selenocysteinyl-tRNA(Sec) from L-seryl-tRNA(Sec) (archaeal/eukaryal route): step 1/2. Its function is as follows. Specifically phosphorylates seryl-tRNA(Sec) to O-phosphoseryl-tRNA(Sec), an activated intermediate for selenocysteine biosynthesis. No activity with other tRNAs has been detected. This is L-seryl-tRNA(Sec) kinase (Pstk) from Mus musculus (Mouse).